We begin with the raw amino-acid sequence, 240 residues long: 4-hydroxy-tetrahydrodipicolinate reductase (240 aa).

NAD(+) is bound at residue 7-12 (GLSGTM). Position 35 (lysine 35) interacts with NADP(+). Residues 74 to 76 (GTT) and 98 to 101 (ATNM) contribute to the NAD(+) site. Histidine 131 acts as the Proton donor/acceptor in catalysis. Histidine 132 contributes to the (S)-2,3,4,5-tetrahydrodipicolinate binding site. The Proton donor role is filled by lysine 135. 141 to 142 (GS) provides a ligand contact to (S)-2,3,4,5-tetrahydrodipicolinate.

Belongs to the DapB family.

It is found in the cytoplasm. It carries out the reaction (S)-2,3,4,5-tetrahydrodipicolinate + NAD(+) + H2O = (2S,4S)-4-hydroxy-2,3,4,5-tetrahydrodipicolinate + NADH + H(+). The enzyme catalyses (S)-2,3,4,5-tetrahydrodipicolinate + NADP(+) + H2O = (2S,4S)-4-hydroxy-2,3,4,5-tetrahydrodipicolinate + NADPH + H(+). It participates in amino-acid biosynthesis; L-lysine biosynthesis via DAP pathway; (S)-tetrahydrodipicolinate from L-aspartate: step 4/4. Functionally, catalyzes the conversion of 4-hydroxy-tetrahydrodipicolinate (HTPA) to tetrahydrodipicolinate. The polypeptide is 4-hydroxy-tetrahydrodipicolinate reductase (Alkaliphilus metalliredigens (strain QYMF)).